The primary structure comprises 95 residues: MKDPRDVLKRPVITERSADLMTEKKYTFEVDVRANKTEVKDAVESIFGVKVDKVNIMNYKGKSKRVGRYTGMTSRRRKAIVKLTADSKEIEIFEA.

This sequence belongs to the universal ribosomal protein uL23 family. As to quaternary structure, part of the 50S ribosomal subunit. Contacts protein L29, and trigger factor when it is bound to the ribosome.

One of the early assembly proteins it binds 23S rRNA. One of the proteins that surrounds the polypeptide exit tunnel on the outside of the ribosome. Forms the main docking site for trigger factor binding to the ribosome. The polypeptide is Large ribosomal subunit protein uL23 (Bacillus subtilis (strain 168)).